A 153-amino-acid chain; its full sequence is SsrA-binding protein (153 aa).

This sequence belongs to the SmpB family.

The protein localises to the cytoplasm. Its function is as follows. Required for rescue of stalled ribosomes mediated by trans-translation. Binds to transfer-messenger RNA (tmRNA), required for stable association of tmRNA with ribosomes. tmRNA and SmpB together mimic tRNA shape, replacing the anticodon stem-loop with SmpB. tmRNA is encoded by the ssrA gene; the 2 termini fold to resemble tRNA(Ala) and it encodes a 'tag peptide', a short internal open reading frame. During trans-translation Ala-aminoacylated tmRNA acts like a tRNA, entering the A-site of stalled ribosomes, displacing the stalled mRNA. The ribosome then switches to translate the ORF on the tmRNA; the nascent peptide is terminated with the 'tag peptide' encoded by the tmRNA and targeted for degradation. The ribosome is freed to recommence translation, which seems to be the essential function of trans-translation. This Desulforudis audaxviator (strain MP104C) protein is SsrA-binding protein.